A 276-amino-acid chain; its full sequence is 4-hydroxy-tetrahydrodipicolinate reductase (276 aa).

NAD(+)-binding positions include 18-23 and Asp44; that span reads GASGRM. Arg45 contacts NADP(+). Residues 107–109 and 131–134 each bind NAD(+); these read GTT and APNM. The active-site Proton donor/acceptor is His164. His165 serves as a coordination point for (S)-2,3,4,5-tetrahydrodipicolinate. Lys168 functions as the Proton donor in the catalytic mechanism. 174–175 lines the (S)-2,3,4,5-tetrahydrodipicolinate pocket; it reads GT.

This sequence belongs to the DapB family.

It is found in the cytoplasm. The enzyme catalyses (S)-2,3,4,5-tetrahydrodipicolinate + NAD(+) + H2O = (2S,4S)-4-hydroxy-2,3,4,5-tetrahydrodipicolinate + NADH + H(+). It carries out the reaction (S)-2,3,4,5-tetrahydrodipicolinate + NADP(+) + H2O = (2S,4S)-4-hydroxy-2,3,4,5-tetrahydrodipicolinate + NADPH + H(+). It participates in amino-acid biosynthesis; L-lysine biosynthesis via DAP pathway; (S)-tetrahydrodipicolinate from L-aspartate: step 4/4. Its function is as follows. Catalyzes the conversion of 4-hydroxy-tetrahydrodipicolinate (HTPA) to tetrahydrodipicolinate. The protein is 4-hydroxy-tetrahydrodipicolinate reductase of Aromatoleum aromaticum (strain DSM 19018 / LMG 30748 / EbN1) (Azoarcus sp. (strain EbN1)).